The chain runs to 394 residues: Chorismate synthase (394 aa).

NADP(+)-binding residues include arginine 40 and arginine 46. Residues 135-137 and 255-256 each bind FMN; these read RAS and QA. The segment at 270–291 is disordered; the sequence is RRRGSGAHDEIEPAGAGSRRVR. Residues glycine 302, 317–321, and arginine 343 each bind FMN; that span reads KPISS.

This sequence belongs to the chorismate synthase family. Homotetramer. The cofactor is FMNH2.

It catalyses the reaction 5-O-(1-carboxyvinyl)-3-phosphoshikimate = chorismate + phosphate. The protein operates within metabolic intermediate biosynthesis; chorismate biosynthesis; chorismate from D-erythrose 4-phosphate and phosphoenolpyruvate: step 7/7. Its function is as follows. Catalyzes the anti-1,4-elimination of the C-3 phosphate and the C-6 proR hydrogen from 5-enolpyruvylshikimate-3-phosphate (EPSP) to yield chorismate, which is the branch point compound that serves as the starting substrate for the three terminal pathways of aromatic amino acid biosynthesis. This reaction introduces a second double bond into the aromatic ring system. The chain is Chorismate synthase from Frankia casuarinae (strain DSM 45818 / CECT 9043 / HFP020203 / CcI3).